A 2514-amino-acid polypeptide reads, in one-letter code: Probable polyketide synthase 8/35 (2514 aa).

Positions 11 to 442 (DKGVAIVGVG…GSNCCLLISE (432 aa)) constitute a Ketosynthase family 3 (KS3) domain. Catalysis depends on for beta-ketoacyl synthase activity residues cysteine 181, histidine 323, and histidine 362. The acyl/malonyl transferase stretch occupies residues 635 to 668 (GVNPSFILGHSLGEISAAYCSGMIDLDTFCYTVY). Serine 645 serves as the catalytic For acyl/malonyl transferase activity. The segment at 925-1047 (IDHLGLSNSY…ANFQLLDHGN (123 aa)) is N-terminal hotdog fold. Residues 925-1209 (IDHLGLSNSY…FKSLIPIKHS (285 aa)) form the PKS/mFAS DH domain. Histidine 959 acts as the Proton acceptor; for dehydratase activity in catalysis. The tract at residues 1064–1209 (NLSKLTKNEL…FKSLIPIKHS (146 aa)) is C-terminal hotdog fold. The Proton donor; for dehydratase activity role is filled by aspartate 1122. In terms of domain architecture, Carrier spans 2431–2508 (IGNKNIDELF…ISIKMILNSL (78 aa)). Serine 2468 is modified (O-(pantetheine 4'-phosphoryl)serine).

Pantetheine 4'-phosphate is required as a cofactor.

Its function is as follows. Probable polyketide synthase. This chain is Probable polyketide synthase 8/35 (pks8), found in Dictyostelium discoideum (Social amoeba).